We begin with the raw amino-acid sequence, 212 residues long: Uridine kinase (212 aa).

13-20 is an ATP binding site; sequence GASASGKS.

It belongs to the uridine kinase family.

The protein resides in the cytoplasm. It carries out the reaction uridine + ATP = UMP + ADP + H(+). The enzyme catalyses cytidine + ATP = CMP + ADP + H(+). It functions in the pathway pyrimidine metabolism; CTP biosynthesis via salvage pathway; CTP from cytidine: step 1/3. The protein operates within pyrimidine metabolism; UMP biosynthesis via salvage pathway; UMP from uridine: step 1/1. This is Uridine kinase from Shewanella denitrificans (strain OS217 / ATCC BAA-1090 / DSM 15013).